Here is a 451-residue protein sequence, read N- to C-terminus: ESX secretion system protein YukC (451 aa).

The chain crosses the membrane as a helical span at residues 221 to 241 (IGLGLIVLLVPALIYSMYALF). The stretch at 362–447 (DEDIQKELDS…KKETEKKDEK (86 aa)) forms a coiled coil. The span at 376 to 386 (LEKAQKERQEN) shows a compositional bias: basic and acidic residues. The interval 376–451 (LEKAQKERQE…EKKDEKKDDK (76 aa)) is disordered. The span at 387-397 (KQSNSETSLVD) shows a compositional bias: polar residues. Over residues 406 to 451 (DEEKQAEEKAAEEKAAAEEKAKKEEQKEKEDEKKETEKKDEKKDDK) the composition is skewed to basic and acidic residues.

It belongs to the EssB family.

Its subcellular location is the cell membrane. Its function is as follows. Required for YukE secretion. Probable component or regulator of the ESX/ESAT-6-like secretion system (BsEss). Required to deliver LXG toxins to target cells. The polypeptide is ESX secretion system protein YukC (yukC) (Bacillus subtilis (strain 168)).